We begin with the raw amino-acid sequence, 467 residues long: ATP synthase subunit beta (467 aa).

154–161 lines the ATP pocket; sequence GGAGVGKT.

This sequence belongs to the ATPase alpha/beta chains family. As to quaternary structure, F-type ATPases have 2 components, CF(1) - the catalytic core - and CF(0) - the membrane proton channel. CF(1) has five subunits: alpha(3), beta(3), gamma(1), delta(1), epsilon(1). CF(0) has three main subunits: a(1), b(2) and c(9-12). The alpha and beta chains form an alternating ring which encloses part of the gamma chain. CF(1) is attached to CF(0) by a central stalk formed by the gamma and epsilon chains, while a peripheral stalk is formed by the delta and b chains.

It localises to the cell inner membrane. The enzyme catalyses ATP + H2O + 4 H(+)(in) = ADP + phosphate + 5 H(+)(out). In terms of biological role, produces ATP from ADP in the presence of a proton gradient across the membrane. The catalytic sites are hosted primarily by the beta subunits. The protein is ATP synthase subunit beta of Leptospira borgpetersenii serovar Hardjo-bovis (strain JB197).